Reading from the N-terminus, the 464-residue chain is GDNF family receptor alpha-2 (464 aa).

An N-terminal signal peptide occupies residues 1 to 21 (MILANAFCLFFFLDETLRSLA). 14 cysteine pairs are disulfide-bonded: Cys40-Cys93, Cys47-Cys53, Cys63-Cys78, Cys95-Cys105, Cys161-Cys222, Cys168-Cys174, Cys185-Cys200, Cys195-Cys241, Cys224-Cys229, Cys251-Cys323, Cys258-Cys264, Cys275-Cys293, Cys285-Cys347, and Cys325-Cys335. Asn52 carries an N-linked (GlcNAc...) asparagine glycan. Asn357 carries an N-linked (GlcNAc...) asparagine glycan. Residues 363-392 (MSPKGPTFSATQAPRVEKTPSLPDDLSDST) form a disordered region. Low complexity predominate over residues 381 to 392 (TPSLPDDLSDST). An N-linked (GlcNAc...) asparagine glycan is attached at Asn413. Ser443 is lipidated: GPI-anchor amidated serine. Positions 444 to 464 (CRARLSTALTALPLLMVTLAQ) are cleaved as a propeptide — removed in mature form.

This sequence belongs to the GDNFR family. Interacts with NRTN ligand and RET: forms a 2:2:2 ternary complex composed of NRTN ligand, GFRA2 and RET receptor. Also forms a 4:4:4 tetrameric complex composed of 4 copies of NRTN ligand, GFRA2 and RET receptor, which prevents endocytosis of RET. Interacts with SORL1. In terms of tissue distribution, neurons of the superior cervical and dorsal root ganglia, and adult brain and testis. Low level in the substantia nigra, spleen and adrenal gland. Isoform 1, isoform 2 and isoform 3 are all expressed in brain, liver, ileum, spleen, heart and kidney. In brain, isoform 1 is most abundant, isoform 2 slightly less and isoform 3 is lowest. No significant levels of isoform 1, isoform 2 or isoform 3 expression in testis.

The protein resides in the cell membrane. Receptor for neurturin (NRTN), a growth factor that supports the survival of sympathetic neurons. NRTN-binding leads to autophosphorylation and activation of the RET receptor. Also able to mediate GDNF signaling through the RET tyrosine kinase receptor. Functionally, participates in NRTN-induced 'Ser-727' phosphorylation of STAT3. This chain is GDNF family receptor alpha-2, found in Mus musculus (Mouse).